Here is a 244-residue protein sequence, read N- to C-terminus: 1-(5-phosphoribosyl)-5-[(5-phosphoribosylamino)methylideneamino] imidazole-4-carboxamide isomerase (244 aa).

Residue Asp8 is the Proton acceptor of the active site. The active-site Proton donor is Asp129.

Belongs to the HisA/HisF family.

The protein localises to the cytoplasm. It carries out the reaction 1-(5-phospho-beta-D-ribosyl)-5-[(5-phospho-beta-D-ribosylamino)methylideneamino]imidazole-4-carboxamide = 5-[(5-phospho-1-deoxy-D-ribulos-1-ylimino)methylamino]-1-(5-phospho-beta-D-ribosyl)imidazole-4-carboxamide. It functions in the pathway amino-acid biosynthesis; L-histidine biosynthesis; L-histidine from 5-phospho-alpha-D-ribose 1-diphosphate: step 4/9. The protein is 1-(5-phosphoribosyl)-5-[(5-phosphoribosylamino)methylideneamino] imidazole-4-carboxamide isomerase of Chelativorans sp. (strain BNC1).